Consider the following 254-residue polypeptide: Thiazole synthase (254 aa).

Lysine 93 functions as the Schiff-base intermediate with DXP in the catalytic mechanism. 1-deoxy-D-xylulose 5-phosphate contacts are provided by residues glycine 154, 181-182 (AG), and 203-204 (NT).

Belongs to the ThiG family. As to quaternary structure, homotetramer. Forms heterodimers with either ThiH or ThiS.

The protein resides in the cytoplasm. It catalyses the reaction [ThiS sulfur-carrier protein]-C-terminal-Gly-aminoethanethioate + 2-iminoacetate + 1-deoxy-D-xylulose 5-phosphate = [ThiS sulfur-carrier protein]-C-terminal Gly-Gly + 2-[(2R,5Z)-2-carboxy-4-methylthiazol-5(2H)-ylidene]ethyl phosphate + 2 H2O + H(+). It functions in the pathway cofactor biosynthesis; thiamine diphosphate biosynthesis. Catalyzes the rearrangement of 1-deoxy-D-xylulose 5-phosphate (DXP) to produce the thiazole phosphate moiety of thiamine. Sulfur is provided by the thiocarboxylate moiety of the carrier protein ThiS. In vitro, sulfur can be provided by H(2)S. This is Thiazole synthase from Ruegeria pomeroyi (strain ATCC 700808 / DSM 15171 / DSS-3) (Silicibacter pomeroyi).